The chain runs to 115 residues: NADH-ubiquinone oxidoreductase chain 3 (115 aa).

Helical transmembrane passes span 1 to 21, 55 to 75, and 87 to 107; these read MITL…LLII, FFLV…LFPL, and AIIL…YEWL.

Belongs to the complex I subunit 3 family.

Its subcellular location is the mitochondrion membrane. It catalyses the reaction a ubiquinone + NADH + 5 H(+)(in) = a ubiquinol + NAD(+) + 4 H(+)(out). Its function is as follows. Core subunit of the mitochondrial membrane respiratory chain NADH dehydrogenase (Complex I) that is believed to belong to the minimal assembly required for catalysis. Complex I functions in the transfer of electrons from NADH to the respiratory chain. The immediate electron acceptor for the enzyme is believed to be ubiquinone. In Myxine glutinosa (Atlantic hagfish), this protein is NADH-ubiquinone oxidoreductase chain 3 (MT-ND3).